A 249-amino-acid chain; its full sequence is Vacuolar iron transporter homolog 3 (249 aa).

Residues 1–32 (MAMQMNSVVHVSTSPSPSPATSPPPEGKQEHG) are disordered. Topologically, residues 1-74 (MAMQMNSVVH…SGRAQWLRAA (74 aa)) are cytoplasmic. Pro residues predominate over residues 16-26 (SPSPATSPPPE). Residues 75–95 (VLGANDGLVSVASLMIGVGAV) traverse the membrane as a helical segment. The Vacuolar portion of the chain corresponds to 96 to 102 (SESGRAM). A helical transmembrane segment spans residues 103–123 (LVSGVAGLVAGACSMAIGEFV). The Cytoplasmic segment spans residues 124–166 (SVYAQYDIEVAAARRRRRQRRRRCDGDGEEEGSGRLPSPFKAA). A helical transmembrane segment spans residues 167-187 (AASALAFTVGALLPLLAGGFV). Over 188-193 (RPWAPR) the chain is Vacuolar. The chain crosses the membrane as a helical span at residues 194–214 (VAAVCAATSAALAGFGALGAA). The Cytoplasmic segment spans residues 215 to 226 (LGGASPARSAAR). The chain crosses the membrane as a helical span at residues 227–247 (VLLGGWAAMAACYGVLRLFAN). Topologically, residues 248-249 (LY) are vacuolar.

The protein belongs to the CCC1 family.

It is found in the vacuole membrane. The enzyme catalyses Fe(2+)(in) = Fe(2+)(out). Its function is as follows. Probable vacuolar iron transporter that may be involved in the regulation of iron distribution throughout the plant. The protein is Vacuolar iron transporter homolog 3 of Oryza sativa subsp. japonica (Rice).